The chain runs to 526 residues: DDB1- and CUL4-associated factor 17 (526 aa).

A run of 2 helical transmembrane segments spans residues 200 to 220 (ILMR…MLEI) and 237 to 257 (GVLA…EYIV).

The protein resides in the membrane. It is found in the nucleus. Its subcellular location is the nucleolus. The protein operates within protein modification; protein ubiquitination. May function as a substrate receptor for CUL4-DDB1 E3 ubiquitin-protein ligase complex. The protein is DDB1- and CUL4-associated factor 17 (dcaf17) of Danio rerio (Zebrafish).